Here is a 417-residue protein sequence, read N- to C-terminus: Phosphatidylcholine:ceramide cholinephosphotransferase 1 (417 aa).

The 64-residue stretch at 11–74 (WSPEEVTNWL…LHMIETLKMA (64 aa)) folds into the SAM domain. A run of 5 helical transmembrane segments spans residues 140–160 (FLAF…ISVV), 188–208 (FSIC…QWLL), 219–239 (FFCI…VTTL), 280–300 (MCGD…YLFI), and 308–328 (LWWY…CILL). His-289 is a catalytic residue. The Cytoplasmic segment spans residues 329-417 (AHDHYTVDVV…VKYSRLVNDT (89 aa)). Active-site residues include His-332 and Asp-336.

The protein belongs to the sphingomyelin synthase family.

Its subcellular location is the golgi apparatus membrane. It carries out the reaction an N-acylsphing-4-enine + a 1,2-diacyl-sn-glycero-3-phosphocholine = a sphingomyelin + a 1,2-diacyl-sn-glycerol. The enzyme catalyses an N-acylsphing-4-enine + a 1,2-diacyl-sn-glycero-3-phosphoethanolamine = an N-acylsphing-4-enine 1-phosphoethanolamine + a 1,2-diacyl-sn-glycerol. Major sphingomyelin synthase at the Golgi apparatus. Catalyzes the reversible transfer of phosphocholine moiety in sphingomyelin biosynthesis: in the forward reaction transfers phosphocholine head group of phosphatidylcholine (PC) on to ceramide (CER) to form ceramide phosphocholine (sphingomyelin, SM) and diacylglycerol (DAG) as by-product, and in the reverse reaction transfers phosphocholine from SM to DAG to form PC and CER. The direction of the reaction depends on the levels of CER and DAG in Golgi membranes. Converts the newly synthesized CER, that is transported from the endoplasmic reticulum to the trans-Golgi by the Cer transport protein (CERT), to SM. Can form a heteromeric complex with glucosylceramide synthase (GCS) increasing SMS activity and reducing glucosylceramide synthesis, a critical mechanism that controls the metabolic fate of CER in the Golgi. Does not use free phosphorylcholine or CDP-choline as donor. Can also transfer phosphoethanolamine head group of phosphatidylethanolamine (PE) on to CER to form ceramide phosphoethanolamine (CPE). Regulates receptor-mediated signal transduction via mitogenic DAG and proapoptotic CER, as well as via SM, a structural component of membrane rafts that serve as platforms for signal transduction and protein sorting. Plays a role in secretory transport via regulation of DAG pool at the Golgi apparatus and its downstream effects on PRKD1. The protein is Phosphatidylcholine:ceramide cholinephosphotransferase 1 (SGMS1) of Gallus gallus (Chicken).